The sequence spans 72 residues: MGKQPVKLKAVVYALSPFQQKIMTGLWKDLPEKIHHKVSENWISATLLVTPVVGTYWYAQYFKEQEKLEHRF.

The Mitochondrial matrix segment spans residues 1-41 (MGKQPVKLKAVVYALSPFQQKIMTGLWKDLPEKIHHKVSEN). A helical transmembrane segment spans residues 42–58 (WISATLLVTPVVGTYWY). Over 59–72 (AQYFKEQEKLEHRF) the chain is Mitochondrial intermembrane.

This sequence belongs to the UQCRQ/QCR8 family. Component of the ubiquinol-cytochrome c oxidoreductase (cytochrome b-c1 complex, complex III, CIII), a multisubunit enzyme composed of 10 subunits. The complex is composed of 3 respiratory subunits cytochrome b (MT-CYB), cytochrome c1 (CYC1-1 or CYC1-2) and Rieske protein (UCR1-1 or UCR1-2), 2 core protein subunits MPPalpha1 (or MPPalpha2) and MPPB, and 5 low-molecular weight protein subunits QCR7-1 (or QCR7-2), UCRQ-1 (or UCRQ-2), QCR9, UCRY and probably QCR6-1 (or QCR6-2). The complex exists as an obligatory dimer and forms supercomplexes (SCs) in the inner mitochondrial membrane with NADH-ubiquinone oxidoreductase (complex I, CI), resulting in different assemblies (supercomplexes SCI(1)III(2) and SCI(2)III(4)).

It is found in the mitochondrion inner membrane. In terms of biological role, component of the ubiquinol-cytochrome c oxidoreductase, a multisubunit transmembrane complex that is part of the mitochondrial electron transport chain which drives oxidative phosphorylation. The respiratory chain contains 3 multisubunit complexes succinate dehydrogenase (complex II, CII), ubiquinol-cytochrome c oxidoreductase (cytochrome b-c1 complex, complex III, CIII) and cytochrome c oxidase (complex IV, CIV), that cooperate to transfer electrons derived from NADH and succinate to molecular oxygen, creating an electrochemical gradient over the inner membrane that drives transmembrane transport and the ATP synthase. The cytochrome b-c1 complex catalyzes electron transfer from ubiquinol to cytochrome c, linking this redox reaction to translocation of protons across the mitochondrial inner membrane, with protons being carried across the membrane as hydrogens on the quinol. In the process called Q cycle, 2 protons are consumed from the matrix, 4 protons are released into the intermembrane space and 2 electrons are passed to cytochrome c. In Arabidopsis thaliana (Mouse-ear cress), this protein is Cytochrome b-c1 complex subunit 8-1, mitochondrial (UCRQ-1).